We begin with the raw amino-acid sequence, 122 residues long: Seripauperin-5 (122 aa).

Residues 7-24 (IAAGVAAIAAGASAAATT) form a helical membrane-spanning segment.

The protein belongs to the SRP1/TIP1 family. Seripauperin subfamily.

It is found in the membrane. This is Seripauperin-5 (PAU5) from Saccharomyces cerevisiae (strain ATCC 204508 / S288c) (Baker's yeast).